A 121-amino-acid chain; its full sequence is uncharacterized protein (121 aa).

The segment covering 12 to 24 (EEGGASAAAPDAS) has biased composition (low complexity). 2 disordered regions span residues 12–63 (EEGG…RLEP) and 101–121 (KKLA…SPVV). Over residues 26-35 (KSKKGARPCF) the composition is skewed to basic residues. Positions 40–49 (QAGSCMTGRQ) are enriched in polar residues. The segment covering 112–121 (GSQKERSPVV) has biased composition (basic and acidic residues).

This is an uncharacterized protein from Homo sapiens (Human).